Reading from the N-terminus, the 155-residue chain is Probable Brix domain-containing ribosomal biogenesis protein (155 aa).

The region spanning 1–155 (MLLTTSRKPS…LLIRDFRVGE (155 aa)) is the Brix domain.

In terms of biological role, probably involved in the biogenesis of the ribosome. The chain is Probable Brix domain-containing ribosomal biogenesis protein from Methanothermobacter thermautotrophicus (strain ATCC 29096 / DSM 1053 / JCM 10044 / NBRC 100330 / Delta H) (Methanobacterium thermoautotrophicum).